A 337-amino-acid chain; its full sequence is Ribosomal RNA small subunit methyltransferase C (337 aa).

Belongs to the methyltransferase superfamily. RsmC family. Monomer.

It is found in the cytoplasm. It catalyses the reaction guanosine(1207) in 16S rRNA + S-adenosyl-L-methionine = N(2)-methylguanosine(1207) in 16S rRNA + S-adenosyl-L-homocysteine + H(+). Its function is as follows. Specifically methylates the guanine in position 1207 of 16S rRNA in the 30S particle. The sequence is that of Ribosomal RNA small subunit methyltransferase C from Acinetobacter baumannii (strain AB307-0294).